The chain runs to 2193 residues: Genome polyprotein (2193 aa).

Residues 1–22 (MGSQVSTQRSGSHENSNSATEG) are disordered. A lipid anchor (N-myristoyl glycine; by host) is attached at Gly-2. Over 2–1503 (GSQVSTQRSG…HLNRAVLVMQ (1502 aa)) the chain is Cytoplasmic. 2 amphipathic alpha-helix regions span residues 566–588 (GDRVADVIESSIGDSVSKALTPA) and 568–588 (RVADVIESSIGDSVSKALTPA). Residues His-883 and Asp-901 each act as for protease 2A activity in the active site. Residues Cys-918 and Cys-920 each coordinate Zn(2+). The active-site For protease 2A activity is Cys-972. Zn(2+)-binding residues include Cys-978 and His-980. Positions 1112 to 1184 (SASWLKKFND…EQSAASQEDL (73 aa)) are membrane-binding. Residues 1112 to 1250 (SASWLKKFND…SPGTGKSLAT (139 aa)) form an oligomerization region. An RNA-binding region spans residues 1133 to 1137 (FNKIS). The SF3 helicase domain maps to 1216-1374 (EKRMNNYMQF…YKTDLGRLDA (159 aa)). 1240–1247 (GSPGTGKS) is a binding site for ATP. Residues Cys-1381, Cys-1392, and Cys-1397 each coordinate Zn(2+). The segment at 1381–1397 (CTENNTANFKRCSPLVC) adopts a C4-type; degenerate zinc-finger fold. The RNA-binding stretch occupies residues 1424–1431 (EYNNRSAI). Residues 1435-1440 (IEALFQ) form an oligomerization region. Residues 1504–1519 (SIATVVAVVSLVYVIY) lie within the membrane without spanning it. The Cytoplasmic segment spans residues 1520–2193 (KLFAGFQGAY…NLRRNWLELF (674 aa)). The residue at position 1529 (Tyr-1529) is an O-(5'-phospho-RNA)-tyrosine. Positions 1549–1727 (GPSLDFALSL…FCAGLKRSYF (179 aa)) constitute a Peptidase C3 domain. Catalysis depends on for protease 3C activity residues His-1588, Glu-1619, and Cys-1695. One can recognise a RdRp catalytic domain in the interval 1958–2073 (GSLFAFDYSG…ASYPFPIDCL (116 aa)). Residues Asp-1964 and Asp-2060 each contribute to the Mg(2+) site.

The protein belongs to the picornaviruses polyprotein family. In terms of assembly, interacts with capsid protein VP1 and capsid protein VP3 to form heterotrimeric protomers. As to quaternary structure, interacts with capsid protein VP0, and capsid protein VP3 to form heterotrimeric protomers. Five protomers subsequently associate to form pentamers which serve as building blocks for the capsid. Interacts with capsid protein VP2, capsid protein VP3 and capsid protein VP4 following cleavage of capsid protein VP0. Interacts with host SCARB2. Interacts with host ARF6; this interaction mediates viral endocytosis. Interacts with capsid protein VP1 and capsid protein VP3 in the mature capsid. Interacts with host SCARB2. In terms of assembly, interacts with capsid protein VP0 and capsid protein VP1 to form heterotrimeric protomers. Five protomers subsequently associate to form pentamers which serve as building blocks for the capsid. Interacts with capsid protein VP4 in the mature capsid. Interacts with protein 2C; this interaction may be important for virion morphogenesis. As to quaternary structure, interacts with capsid protein VP1 and capsid protein VP3. Homodimer. Interacts with host SPOP; this interaction promotes protease 2A ubiquitination and subsequent degradation. In terms of assembly, interacts with host BAX; this interaction activates the mitochondrial apoptotic pathway. Interacts with host ILF2. As to quaternary structure, homohexamer; forms a hexameric ring structure with 6-fold symmetry characteristic of AAA+ ATPases. Interacts (via N-terminus) with host RTN3 (via reticulon domain); this interaction is important for viral replication. Interacts with capsid protein VP3; this interaction may be important for virion morphogenesis. Interacts with protein 3CD. In terms of assembly, homodimer. Interacts with host GBF1. Interacts (via GOLD domain) with host ACBD3 (via GOLD domain); this interaction allows the formation of a viral protein 3A/ACBD3 heterotetramer with a 2:2 stoichiometry, which will stimulate the recruitment of host PI4KB in order to synthesize PI4P at the viral RNA replication sites. As to quaternary structure, interacts with RNA-directed RNA polymerase. Interacts with host IFIH1/MDA5; this interaction inhibits host IFIH1. Interacts with host RIGI. In terms of assembly, interacts with protein 3AB and with RNA-directed RNA polymerase. Interacts with host PPP1R15A. As to quaternary structure, interacts with Viral protein genome-linked and with protein 3CD. Interacts with host NLRP3. Requires Mg(2+) as cofactor. In terms of processing, specific enzymatic cleavages in vivo by the viral proteases yield processing intermediates and the mature proteins. Post-translationally, myristoylation is required for the formation of pentamers during virus assembly. Further assembly of 12 pentamers and a molecule of genomic RNA generates the provirion. During virion maturation, immature virions are rendered infectious following cleavage of VP0 into VP4 and VP2. This maturation seems to be an autocatalytic event triggered by the presence of RNA in the capsid and it is followed by a conformational change infectious virion. In terms of processing, myristoylation is required during RNA encapsidation and formation of the mature virus particle. Post-translationally, VPg is uridylylated by the polymerase into VPg-pUpU. This acts as a nucleotide-peptide primer for the genomic RNA replication.

It is found in the virion. Its subcellular location is the host cytoplasm. The protein resides in the host cytoplasmic vesicle membrane. It localises to the host nucleus. The catalysed reaction is a ribonucleoside 5'-triphosphate + H2O = a ribonucleoside 5'-diphosphate + phosphate + H(+). The enzyme catalyses Selective cleavage of Tyr-|-Gly bond in the picornavirus polyprotein.. It carries out the reaction RNA(n) + a ribonucleoside 5'-triphosphate = RNA(n+1) + diphosphate. It catalyses the reaction Selective cleavage of Gln-|-Gly bond in the poliovirus polyprotein. In other picornavirus reactions Glu may be substituted for Gln, and Ser or Thr for Gly.. Its activity is regulated as follows. Replication or transcription is subject to high level of random mutations by the nucleotide analog ribavirin. Functionally, forms an icosahedral capsid of pseudo T=3 symmetry with capsid proteins VP2 and VP3. The capsid is 300 Angstroms in diameter, composed of 60 copies of each capsid protein and enclosing the viral positive strand RNA genome. Capsid protein VP1 mainly forms the vertices of the capsid. Capsid protein VP1, together with VP2, interacts with host cell receptor SCARB2 to provide virion attachment to target host cells. This attachment induces virion internalization predominantly through clathrin-dependent endocytosis. After binding to its receptor, the capsid undergoes conformational changes. Capsid protein VP1 N-terminus (that contains an amphipathic alpha-helix) and capsid protein VP4 are externalized. Together, they shape a pore in the host membrane through which viral genome is translocated to host cell cytoplasm. In terms of biological role, forms an icosahedral capsid of pseudo T=3 symmetry with capsid proteins VP2 and VP3. The capsid is 300 Angstroms in diameter, composed of 60 copies of each capsid protein and enclosing the viral positive strand RNA genome. Capsid protein VP2, together with VP1, interacts with host cell receptor SCARB2 to provide virion attachment to target host cells. Forms an icosahedral capsid of pseudo T=3 symmetry with capsid proteins VP2 and VP3. The capsid is 300 Angstroms in diameter, composed of 60 copies of each capsid protein and enclosing the viral positive strand RNA genome. Its function is as follows. Lies on the inner surface of the capsid shell. After binding to the host receptor, the capsid undergoes conformational changes. Capsid protein VP4 is released, Capsid protein VP1 N-terminus is externalized, and together, they shape a pore in the host membrane through which the viral genome is translocated into the host cell cytoplasm. Functionally, component of immature procapsids, which is cleaved into capsid proteins VP4 and VP2 after maturation. Allows the capsid to remain inactive before the maturation step. In terms of biological role, cysteine protease that cleaves viral polyprotein and specific host proteins. It is responsible for the autocatalytic cleavage between the P1 and P2 regions, which is the first cleavage occurring in the polyprotein. Also cleaves the host translation initiation factor EIF4G1, in order to shut down the capped cellular mRNA translation. Inhibits the host nucleus-cytoplasm protein and RNA trafficking by cleaving host members of the nuclear pores. Counteracts stress granule formation probably by antagonizing its assembly or promoting its dissassembly. Cleaves and inhibits host IFIH1/MDA5, thereby inhibiting the type-I IFN production and the establishment of the antiviral state. Cleaves and inhibits host MAVS, thereby inhibiting the type-I IFN production and the establishment of the antiviral state. Plays an essential role in the virus replication cycle by acting as a viroporin. Creates a pore in the host endoplasmic reticulum and as a consequence releases Ca2+ in the cytoplasm of infected cell. In turn, high levels of cytoplasmic calcium may trigger membrane trafficking and transport of viral ER-associated proteins to viroplasms, sites of viral genome replication. Also activates the mitochondrial apoptotic pathway by activating host BAX. Its function is as follows. Induces and associates with structural rearrangements of intracellular membranes. Displays RNA-binding, nucleotide binding and NTPase activities. May play a role in virion morphogenesis and viral RNA encapsidation by interacting with the capsid protein VP3. Functionally, localizes the viral replication complex to the surface of membranous vesicles. Together with protein 3CD binds the Cis-Active RNA Element (CRE) which is involved in RNA synthesis initiation. Acts as a cofactor to stimulate the activity of 3D polymerase, maybe through a nucleid acid chaperone activity. In terms of biological role, localizes the viral replication complex to the surface of membranous vesicles. It inhibits host cell endoplasmic reticulum-to-Golgi apparatus transport and causes the disassembly of the Golgi complex, possibly through GBF1 interaction. This would result in depletion of MHC, trail receptors and IFN receptors at the host cell surface. Plays an essential role in viral RNA replication by recruiting ACBD3 and PI4KB at the viral replication sites, thereby allowing the formation of the rearranged membranous structures where viral replication takes place. Acts as a primer for viral RNA replication and remains covalently bound to viral genomic RNA. VPg is uridylylated prior to priming replication into VPg-pUpU. The oriI viral genomic sequence may act as a template for this. The VPg-pUpU is then used as primer on the genomic RNA poly(A) by the RNA-dependent RNA polymerase to replicate the viral genome. During genome replication, the VPg-RNA linkage is removed by the host TDP2, thereby accelerating replication. During the late stage of the replication cycle, host TDP2 is excluded from sites of viral RNA synthesis and encapsidation, allowing for the generation of progeny virions. Its function is as follows. Involved in the viral replication complex and viral polypeptide maturation. It exhibits protease activity with a specificity and catalytic efficiency that is different from protease 3C. Protein 3CD lacks polymerase activity. Protein 3CD binds to the 5'UTR of the viral genome. Regulates host protein expression by interacting with host PPP1R15A to support viral replication. Functionally, major viral protease that mediates proteolytic processing of the polyprotein. Cleaves host EIF5B, contributing to host translation shutoff. Also cleaves host PABPC1, contributing to host translation shutoff. Disassembles host cytoplasmic stress granules by cleaving host G3BP1, although this effect is less prononced than the inhibition induced by protease 2A. Cleaves host RIGI and thus contributes to the inhibition of type I interferon production. Cleaves host IRF7 and thus contributes to the inhibition of type I interferon production. Cleaves host HNRNPA1 thereby increasing the translation of apoptosis protease activating factor APAF1, leading to apoptosis of the host cell. Cleaves host NLRP1, triggers host N-glycine-mediated degradation of the autoinhibitory NLRP1 N-terminal fragment. Cleaves and inactivates host GSDMD, preventing GSDMD-mediated pyroptosis. Also promotes apoptosis in infected cell through cleaving of host PINX1, a telomere binding protein in order to facilitate viral release. Impairs host PML-NBs production via PML cleavage and counter its antiviral activities. In terms of biological role, replicates the viral genomic RNA on the surface of intracellular membranes. May form linear arrays of subunits that propagate along a strong head-to-tail interaction called interface-I. Covalently attaches UMP to a tyrosine of VPg, which is used to prime RNA synthesis. The positive stranded RNA genome is first replicated at virus induced membranous vesicles, creating a dsRNA genomic replication form. This dsRNA is then used as template to synthesize positive stranded RNA genomes. ss(+)RNA genomes are either translated, replicated or encapsidated. Facilitates the assembly of NLRP3 inflammasome complex and stimulates the cleavage of host pro-CASP1 and the secretion of IL-1beta. The polypeptide is Genome polyprotein (Human enterovirus 71 (strain USA/BrCr/1970) (EV71)).